Consider the following 148-residue polypeptide: Nucleoside diphosphate kinase (148 aa).

ATP contacts are provided by Lys-9, Phe-57, Arg-85, Thr-91, Arg-102, and Asn-112. Thr-91 bears the Phosphothreonine mark. Residue His-115 is the Pros-phosphohistidine intermediate of the active site. At Ser-122 the chain carries Phosphoserine.

The protein belongs to the NDK family. In terms of assembly, homotetramer. It depends on Mg(2+) as a cofactor.

The protein resides in the cytoplasm. It catalyses the reaction a 2'-deoxyribonucleoside 5'-diphosphate + ATP = a 2'-deoxyribonucleoside 5'-triphosphate + ADP. It carries out the reaction a ribonucleoside 5'-diphosphate + ATP = a ribonucleoside 5'-triphosphate + ADP. Its function is as follows. Major role in the synthesis of nucleoside triphosphates other than ATP. The ATP gamma phosphate is transferred to the NDP beta phosphate via a ping-pong mechanism, using a phosphorylated active-site intermediate. In Oceanobacillus iheyensis (strain DSM 14371 / CIP 107618 / JCM 11309 / KCTC 3954 / HTE831), this protein is Nucleoside diphosphate kinase.